The primary structure comprises 134 residues: Retinol-binding protein 2 (134 aa).

The all-trans-retinol site is built by Lys41 and Gln109.

This sequence belongs to the calycin superfamily. Fatty-acid binding protein (FABP) family.

The protein resides in the cytoplasm. Its function is as follows. Intracellular transport of retinol. The polypeptide is Retinol-binding protein 2 (RBP2) (Sus scrofa (Pig)).